Reading from the N-terminus, the 207-residue chain is Superoxide dismutase [Mn] (207 aa).

Mn(2+)-binding residues include His28, His76, Asp160, and His164.

This sequence belongs to the iron/manganese superoxide dismutase family. Mn(2+) is required as a cofactor.

The enzyme catalyses 2 superoxide + 2 H(+) = H2O2 + O2. Its function is as follows. Destroys superoxide anion radicals which are normally produced within the cells and which are toxic to biological systems. The chain is Superoxide dismutase [Mn] (sodA) from Mycobacterium leprae (strain TN).